Reading from the N-terminus, the 395-residue chain is Na(+)/H(+) antiporter NhaA 1 (395 aa).

The next 11 membrane-spanning stretches (helical) occupy residues 11-31, 63-83, 99-119, 129-149, 158-178, 183-203, 223-243, 258-278, 282-302, 332-352, and 364-384; these read FFSS…LAMV, MLLW…GLEV, VFPV…YLAF, GWAI…ALLG, IFLM…IALF, LSML…ALNL, VLKS…MIPL, VLHP…NAGV, GVTL…GLFI, IMAV…IATL, and WAKL…YLIL.

Belongs to the NhaA Na(+)/H(+) (TC 2.A.33) antiporter family.

It localises to the cell inner membrane. It carries out the reaction Na(+)(in) + 2 H(+)(out) = Na(+)(out) + 2 H(+)(in). Na(+)/H(+) antiporter that extrudes sodium in exchange for external protons. In Klebsiella pneumoniae subsp. pneumoniae (strain ATCC 700721 / MGH 78578), this protein is Na(+)/H(+) antiporter NhaA 1.